The primary structure comprises 1597 residues: Pentafunctional AROM polypeptide (1597 aa).

A 3-dehydroquinate synthase region spans residues 1-384 (MGVPTKISIL…HEPRASTVSN (384 aa)). Residues 44 to 46 (DTN), 81 to 84 (ESSK), 114 to 116 (GGV), and Asp-119 each bind NAD(+). Residue Arg-130 coordinates 7-phospho-2-dehydro-3-deoxy-D-arabino-heptonate. Residue 139-140 (TT) coordinates NAD(+). Positions 146 and 152 each coordinate 7-phospho-2-dehydro-3-deoxy-D-arabino-heptonate. Residue Lys-161 participates in NAD(+) binding. Asn-162 is a binding site for 7-phospho-2-dehydro-3-deoxy-D-arabino-heptonate. Residues 179–182 (FLNT) and Asn-190 contribute to the NAD(+) site. Residue Glu-194 participates in Zn(2+) binding. 7-phospho-2-dehydro-3-deoxy-D-arabino-heptonate-binding positions include 194 to 197 (EVIK) and Lys-250. Glu-260 functions as the Proton acceptor; for 3-dehydroquinate synthase activity in the catalytic mechanism. Residues 264–268 (RNLLN) and His-271 each bind 7-phospho-2-dehydro-3-deoxy-D-arabino-heptonate. Zn(2+) is bound at residue His-271. His-275 functions as the Proton acceptor; for 3-dehydroquinate synthase activity in the catalytic mechanism. Residues His-287 and Lys-356 each contribute to the 7-phospho-2-dehydro-3-deoxy-D-arabino-heptonate site. Residue His-287 coordinates Zn(2+). Positions 397–842 (VSPGVPKNLN…WDSLAQTFKV (446 aa)) are EPSP synthase. Cys-824 functions as the For EPSP synthase activity in the catalytic mechanism. Positions 866–1057 (ASIFIIGMRG…RSKENTFFVS (192 aa)) are shikimate kinase. ATP is bound at residue 872-879 (GMRGAGKT). Residues 1058–1278 (LTLPDLAPAA…AAPGQLSARE (221 aa)) are 3-dehydroquinase. His-1181 serves as the catalytic Proton acceptor; for 3-dehydroquinate dehydratase activity. Lys-1209 serves as the catalytic Schiff-base intermediate with substrate; for 3-dehydroquinate dehydratase activity. The shikimate dehydrogenase stretch occupies residues 1291 to 1597 (SKKFAVIGNP…VQPKDDDIST (307 aa)).

The protein in the N-terminal section; belongs to the sugar phosphate cyclases superfamily. Dehydroquinate synthase family. This sequence in the 2nd section; belongs to the EPSP synthase family. It in the 3rd section; belongs to the shikimate kinase family. In the 4th section; belongs to the type-I 3-dehydroquinase family. The protein in the C-terminal section; belongs to the shikimate dehydrogenase family. In terms of assembly, homodimer. It depends on Zn(2+) as a cofactor.

It is found in the cytoplasm. It catalyses the reaction 7-phospho-2-dehydro-3-deoxy-D-arabino-heptonate = 3-dehydroquinate + phosphate. It carries out the reaction 3-dehydroquinate = 3-dehydroshikimate + H2O. The enzyme catalyses shikimate + NADP(+) = 3-dehydroshikimate + NADPH + H(+). The catalysed reaction is shikimate + ATP = 3-phosphoshikimate + ADP + H(+). It catalyses the reaction 3-phosphoshikimate + phosphoenolpyruvate = 5-O-(1-carboxyvinyl)-3-phosphoshikimate + phosphate. The protein operates within metabolic intermediate biosynthesis; chorismate biosynthesis; chorismate from D-erythrose 4-phosphate and phosphoenolpyruvate: step 2/7. It participates in metabolic intermediate biosynthesis; chorismate biosynthesis; chorismate from D-erythrose 4-phosphate and phosphoenolpyruvate: step 3/7. Its pathway is metabolic intermediate biosynthesis; chorismate biosynthesis; chorismate from D-erythrose 4-phosphate and phosphoenolpyruvate: step 4/7. It functions in the pathway metabolic intermediate biosynthesis; chorismate biosynthesis; chorismate from D-erythrose 4-phosphate and phosphoenolpyruvate: step 5/7. The protein operates within metabolic intermediate biosynthesis; chorismate biosynthesis; chorismate from D-erythrose 4-phosphate and phosphoenolpyruvate: step 6/7. Functionally, the AROM polypeptide catalyzes 5 consecutive enzymatic reactions in prechorismate polyaromatic amino acid biosynthesis. This is Pentafunctional AROM polypeptide from Ajellomyces dermatitidis (strain ER-3 / ATCC MYA-2586) (Blastomyces dermatitidis).